A 162-amino-acid polypeptide reads, in one-letter code: Interleukin-15 (162 aa).

The signal sequence occupies residues Met-1–Ala-29. A propeptide spanning residues Gly-30 to Ala-48 is cleaved from the precursor. Intrachain disulfides connect Cys-83–Cys-133 and Cys-90–Cys-136. Asn-127 is a glycosylation site (N-linked (GlcNAc...) asparagine).

It belongs to the IL-15/IL-21 family.

The protein resides in the secreted. Cytokine that plays a major role in the development of inflammatory and protective immune responses to microbial invaders and parasites by modulating immune cells of both the innate and adaptive immune systems. Stimulates the proliferation of natural killer cells, T-cells and B-cells and promotes the secretion of several cytokines. In monocytes, induces the production of IL8 and monocyte chemotactic protein 1/CCL2, two chemokines that attract neutrophils and monocytes respectively to sites of infection. Unlike most cytokines, which are secreted in soluble form, IL15 is expressed in association with its high affinity IL15RA on the surface of IL15-producing cells and delivers signals to target cells that express IL2RB and IL2RG receptor subunits. Binding to its receptor triggers the phosphorylation of JAK1 and JAK3 and the recruitment and subsequent phosphorylation of signal transducer and activator of transcription-3/STAT3 and STAT5. In mast cells, induces the rapid tyrosine phosphorylation of STAT6 and thereby controls mast cell survival and release of cytokines such as IL4. The polypeptide is Interleukin-15 (IL15) (Macaca thibetana (Pere David's macaque)).